Consider the following 475-residue polypeptide: MLEDFLKVMPLMTASGISILLILVEAATKNARITRLFAILGFLLVFLSLPFSPSEPDFAFSNMLQSGGFFTYTATVFSIGGLLITLISDKYLEMEDAHHGEYYIILFMAVVGMMLMSAAANLTILFIGLELMSIALYVLAGIMRDDQRSNEAAIKYFLLGAFASGIFLYGIALIYGATGTLYIPQISDHLAKNGFDTLFLSGIALLMIGLLFKVAAVPFHQWSPDVYEGSPTVATAFMATGAKAAALSSMILVGISIAPILETFTAWPTAIAMIATLTMFFGNIAALIQTNLKRMFAYSSIAHAGYMLIGIATGTDSGYAGVLYYIFLYTLMNIGAFGIIILVEQKHQFSELADYEGFFSRAPLLAFLMAMFMFSLAGIPPFGGFIAKYNVFSAAVQADMTWLAVAGVIASAVSVSYYLRVVIAMFMKDTKKQKLNPDPTATATIALVAFLVLLFGIYPSLLIEYTQHALAFAMK.

14 helical membrane-spanning segments follow: residues 8-28 (VMPL…EAAT), 36-56 (LFAI…PSEP), 67-87 (GGFF…ITLI), 100-120 (GEYY…SAAA), 122-142 (LTIL…LAGI), 157-177 (FLLG…IYGA), 199-219 (FLSG…AVPF), 244-264 (AAAL…LETF), 268-288 (PTAI…AALI), 295-315 (MFAY…ATGT), 322-342 (VLYY…IIIL), 366-386 (AFLM…GGFI), 403-423 (LAVA…RVVI), and 443-463 (ATIA…SLLI).

This sequence belongs to the complex I subunit 2 family. NDH-1 is composed of 14 different subunits. Subunits NuoA, H, J, K, L, M, N constitute the membrane sector of the complex.

It localises to the cell inner membrane. It catalyses the reaction a quinone + NADH + 5 H(+)(in) = a quinol + NAD(+) + 4 H(+)(out). NDH-1 shuttles electrons from NADH, via FMN and iron-sulfur (Fe-S) centers, to quinones in the respiratory chain. The immediate electron acceptor for the enzyme in this species is believed to be a menaquinone. Couples the redox reaction to proton translocation (for every two electrons transferred, four hydrogen ions are translocated across the cytoplasmic membrane), and thus conserves the redox energy in a proton gradient. The chain is NADH-quinone oxidoreductase subunit N 1 from Chloroherpeton thalassium (strain ATCC 35110 / GB-78).